Reading from the N-terminus, the 286-residue chain is Probable sulfate transport system permease protein cysT (286 aa).

Helical transmembrane passes span 27–47 (PWQL…IALL), 77–97 (TALF…WVLV), 106–126 (IIDA…GLTL), 147–167 (VAFT…PFVV), 196–216 (FWRV…ALAF), 225–245 (SVVI…VLIF), and 257–277 (TIIG…INFI). An ABC transmembrane type-1 domain is found at 71 to 272 (YVVTLMTALF…ILSISLFLLF (202 aa)).

This sequence belongs to the binding-protein-dependent transport system permease family. CysTW subfamily.

The protein resides in the plastid. It is found in the chloroplast membrane. In terms of biological role, part of the ABC transporter complex cysAWTP (TC 3.A.1.6.1) involved in sulfate/thiosulfate import. Probably responsible for the translocation of the substrate across the membrane. The chain is Probable sulfate transport system permease protein cysT (cysT) from Chlorokybus atmophyticus (Soil alga).